The primary structure comprises 338 residues: Ketol-acid reductoisomerase (NADP(+)) (338 aa).

Residues 1–181 (MKVYYDKDAD…GGGKAGIIET (181 aa)) form the KARI N-terminal Rossmann domain. NADP(+) is bound by residues 24 to 27 (YGSQ), arginine 47, and serine 52. The active site involves histidine 107. Glycine 133 contributes to the NADP(+) binding site. A KARI C-terminal knotted domain is found at 182 to 327 (NFREETETDL…EKLRAMMPWI (146 aa)). Mg(2+)-binding residues include aspartate 190, glutamate 194, glutamate 226, and glutamate 230. Serine 251 provides a ligand contact to substrate.

It belongs to the ketol-acid reductoisomerase family. It depends on Mg(2+) as a cofactor.

It carries out the reaction (2R)-2,3-dihydroxy-3-methylbutanoate + NADP(+) = (2S)-2-acetolactate + NADPH + H(+). It catalyses the reaction (2R,3R)-2,3-dihydroxy-3-methylpentanoate + NADP(+) = (S)-2-ethyl-2-hydroxy-3-oxobutanoate + NADPH + H(+). It participates in amino-acid biosynthesis; L-isoleucine biosynthesis; L-isoleucine from 2-oxobutanoate: step 2/4. Its pathway is amino-acid biosynthesis; L-valine biosynthesis; L-valine from pyruvate: step 2/4. In terms of biological role, involved in the biosynthesis of branched-chain amino acids (BCAA). Catalyzes an alkyl-migration followed by a ketol-acid reduction of (S)-2-acetolactate (S2AL) to yield (R)-2,3-dihydroxy-isovalerate. In the isomerase reaction, S2AL is rearranged via a Mg-dependent methyl migration to produce 3-hydroxy-3-methyl-2-ketobutyrate (HMKB). In the reductase reaction, this 2-ketoacid undergoes a metal-dependent reduction by NADPH to yield (R)-2,3-dihydroxy-isovalerate. The protein is Ketol-acid reductoisomerase (NADP(+)) of Variovorax paradoxus (strain S110).